The following is an 82-amino-acid chain: Translational regulator CsrA (82 aa).

It belongs to the CsrA/RsmA family. As to quaternary structure, homodimer; the beta-strands of each monomer intercalate to form a hydrophobic core, while the alpha-helices form wings that extend away from the core.

Its subcellular location is the cytoplasm. Functionally, a translational regulator that binds mRNA to regulate translation initiation and/or mRNA stability. Usually binds in the 5'-UTR at or near the Shine-Dalgarno sequence preventing ribosome-binding, thus repressing translation. Its main target seems to be the major flagellin gene, while its function is anatagonized by FliW. The polypeptide is Translational regulator CsrA (Geobacillus sp. (strain WCH70)).